The chain runs to 372 residues: Serine/threonine-protein kinase 17B (372 aa).

Residues 33–293 (ILTSKELGRG…AEICLSHSWL (261 aa)) form the Protein kinase domain. ATP contacts are provided by residues 39–47 (LGRGKFAVV) and K62. The active-site Proton acceptor is D158. The tract at residues 305-362 (EETSSSSQTQDHSVRSSEDKTSKSSCNGTCGDREDKENIPEDSSMVSKRFRFDDSLPN) is disordered. The segment covering 316 to 326 (HSVRSSEDKTS) has biased composition (basic and acidic residues).

The protein belongs to the protein kinase superfamily. CAMK Ser/Thr protein kinase family. DAP kinase subfamily. As to quaternary structure, interacts with CHP1; the interaction induces CHP1 to translocate from the Golgi to the nucleus. Autophosphorylated. Highly expressed in placenta, lung, pancreas. Lower levels in heart, brain, liver, skeletal muscle and kidney.

Its subcellular location is the nucleus. The protein localises to the cell membrane. It is found in the endoplasmic reticulum-Golgi intermediate compartment. It carries out the reaction L-seryl-[protein] + ATP = O-phospho-L-seryl-[protein] + ADP + H(+). The catalysed reaction is L-threonyl-[protein] + ATP = O-phospho-L-threonyl-[protein] + ADP + H(+). In terms of biological role, phosphorylates myosin light chains. Acts as a positive regulator of apoptosis. The sequence is that of Serine/threonine-protein kinase 17B (STK17B) from Homo sapiens (Human).